The primary structure comprises 100 residues: UPF0213 protein YhbQ (100 aa).

Residues 2–77 enclose the GIY-YIG domain; the sequence is TPWFLYLIRT…KQLTKRQKER (76 aa).

This sequence belongs to the UPF0213 family.

This chain is UPF0213 protein YhbQ, found in Escherichia fergusonii (strain ATCC 35469 / DSM 13698 / CCUG 18766 / IAM 14443 / JCM 21226 / LMG 7866 / NBRC 102419 / NCTC 12128 / CDC 0568-73).